Consider the following 414-residue polypeptide: Relaxin-3 receptor 2 (414 aa).

The Extracellular portion of the chain corresponds to 1-43; that stretch reads MATSNSSASLPTLFWVNGSGDSVLSTDGAAMPVQFLVLRIMVA. N5 and N17 each carry an N-linked (GlcNAc...) asparagine glycan. The helical transmembrane segment at 44-64 threads the bilayer; that stretch reads LAYGLVGIIGLLGNLAVLWVL. Topologically, residues 65–77 are cytoplasmic; it reads GNCGQRVPGLSSD. The chain crosses the membrane as a helical span at residues 78–98; it reads TFVFSLALADLGLALTLPFWA. The Extracellular portion of the chain corresponds to 99 to 116; that stretch reads TESAMDFHWPFGSALCKV. A disulfide bridge connects residues C114 and C191. Residues 117-137 form a helical membrane-spanning segment; that stretch reads VLTTTVLSIYASTFLITALSI. Residues 138 to 155 lie on the Cytoplasmic side of the membrane; that stretch reads ARYWVVAMAVGPGSHLSV. The chain crosses the membrane as a helical span at residues 156–176; the sequence is FWARVVTLAVWVAAALVTVPT. The Extracellular portion of the chain corresponds to 177 to 209; it reads AIFGAEVELWGVCLCLLRFPSRYWLGAYQLQRV. A helical membrane pass occupies residues 210-230; that stretch reads VLAFIVPLGVITTSYLLLLAF. Residues 231 to 255 are Cytoplasmic-facing; the sequence is LERQQRCRPRQWQDSRVVARSVRVL. The chain crosses the membrane as a helical span at residues 256–276; it reads VASFALCWVPNHVVTLWEILV. At 277–293 the chain is on the extracellular side; the sequence is RFDLVPWDSTFYTFHTY. A helical transmembrane segment spans residues 294 to 316; it reads ILPITTCLAHSNSCLNPVIYCLL. The Cytoplasmic portion of the chain corresponds to 317 to 414; the sequence is RREPQQVLVS…SQAAVSPGEV (98 aa).

This sequence belongs to the G-protein coupled receptor 1 family. As to expression, detected only in bone marrow.

The protein localises to the cell membrane. In terms of biological role, high affinity receptor for INSL5. Also acts as a receptor for RLN3/relaxin-3, as well as bradykinin and kallidin. Binding of the ligand inhibit cAMP accumulation. This is Relaxin-3 receptor 2 (Rxfp4) from Mus musculus (Mouse).